The sequence spans 557 residues: Arginine--tRNA ligase (557 aa).

Positions 132–142 (ANPTGDLHLGH) match the 'HIGH' region motif.

This sequence belongs to the class-I aminoacyl-tRNA synthetase family. In terms of assembly, monomer.

The protein resides in the cytoplasm. The enzyme catalyses tRNA(Arg) + L-arginine + ATP = L-arginyl-tRNA(Arg) + AMP + diphosphate. This is Arginine--tRNA ligase from Geobacillus kaustophilus (strain HTA426).